A 691-amino-acid chain; its full sequence is DNA ligase (691 aa).

NAD(+) is bound by residues 41 to 45, 90 to 91, and Glu130; these read DAEYD and SL. The active-site N6-AMP-lysine intermediate is Lys132. Positions 153, 190, 307, and 331 each coordinate NAD(+). The Zn(2+) site is built by Cys425, Cys428, Cys443, and Cys449. The 82-residue stretch at 610 to 691 folds into the BRCT domain; sequence APQGVLAGKT…MHKLLEGHAR (82 aa).

The protein belongs to the NAD-dependent DNA ligase family. LigA subfamily. Mg(2+) is required as a cofactor. Requires Mn(2+) as cofactor.

It carries out the reaction NAD(+) + (deoxyribonucleotide)n-3'-hydroxyl + 5'-phospho-(deoxyribonucleotide)m = (deoxyribonucleotide)n+m + AMP + beta-nicotinamide D-nucleotide.. Its function is as follows. DNA ligase that catalyzes the formation of phosphodiester linkages between 5'-phosphoryl and 3'-hydroxyl groups in double-stranded DNA using NAD as a coenzyme and as the energy source for the reaction. It is essential for DNA replication and repair of damaged DNA. The protein is DNA ligase of Burkholderia thailandensis (strain ATCC 700388 / DSM 13276 / CCUG 48851 / CIP 106301 / E264).